A 280-amino-acid polypeptide reads, in one-letter code: Lipase chaperone (280 aa).

A helical transmembrane segment spans residues 5–22 (ALTIITIASGSLGAVYFL).

The protein belongs to the lipase chaperone family.

The protein resides in the cell inner membrane. May be involved in the folding of the extracellular lipase during its passage through the periplasm. In Vibrio vulnificus (strain YJ016), this protein is Lipase chaperone (lifO).